The sequence spans 130 residues: Neelaredoxin (130 aa).

The Fe cation site is built by glutamate 15, histidine 17, histidine 45, histidine 51, cysteine 115, and histidine 118.

Belongs to the desulfoferrodoxin family. As to quaternary structure, monomer. Fe cation is required as a cofactor.

The catalysed reaction is 2 superoxide + 2 H(+) = H2O2 + O2. Its function is as follows. Non-heme iron protein. The polypeptide is Neelaredoxin (nlr) (Megalodesulfovibrio gigas (Desulfovibrio gigas)).